The primary structure comprises 574 residues: Lysyl oxidase homolog 1 (574 aa).

The signal sequence occupies residues 1–25; sequence MALARGSRQLGALVWGACLCVLVHG. Residues 26 to 95 constitute a propeptide that is removed on maturation; the sequence is QQAQPGQGSD…RRSHGSPRRR (70 aa). 2 disordered regions span residues 62–123 and 239–374; these read VPAG…GFGQ and GGEE…DLVP. Positions 86-96 are enriched in basic residues; the sequence is RRSHGSPRRRQ. Composition is skewed to pro residues over residues 255 to 268 and 313 to 332; these read PERP…PPPD and YANP…PPYL. An interaction with FBLN5 region spans residues 311 to 369; the sequence is PPYANPPPEAYGPPRALEPPYLPVRSSDTPPPGGERNGAQQGRLSVGSVYRPNQNGRGL. Residues 370–574 form a lysyl-oxidase like region; that stretch reads PDLVPDPNYV…SATNCKIVQS (205 aa). Intrachain disulfides connect Cys395–Cys401, Cys448–Cys497, Cys481–Cys487, Cys508–Cys518, and Cys555–Cys569. Residues His449, His451, and His453 each contribute to the Cu cation site. Positions 477–512 form a cross-link, lysine tyrosylquinone (Lys-Tyr); alternate; the sequence is KASFCLEDSTCDFGNLKRYACTSHTQGLSPGCYDTY. Tyr512 bears the 2',4',5'-topaquinone; alternate mark.

Belongs to the lysyl oxidase family. Interacts (via propeptide) with EFEMP2. Interacts with FBLN5. Cu cation is required as a cofactor. Requires lysine tyrosylquinone residue as cofactor. Post-translationally, the lysine tyrosylquinone cross-link (LTQ) is generated by condensation of the epsilon-amino group of a lysine with a topaquinone produced by oxidation of tyrosine. In terms of processing, proteolytic processing by a furin-like protease causes removal of N-terminal propeptide resulting in an enzyme largely inactive, but further proteolytic processing by BMP1 results in enzyme activation. In terms of tissue distribution, expressed in ocular tissues including the iris, ciliary body, lens and optic nerve. Not detected in the retina.

It is found in the secreted. Its subcellular location is the extracellular space. The protein localises to the extracellular matrix. It catalyses the reaction L-lysyl-[protein] + O2 + H2O = (S)-2-amino-6-oxohexanoyl-[protein] + H2O2 + NH4(+). Functionally, catalyzes the oxidative deamination of lysine and hydroxylysine residues in collagen and elastin, resulting in the formation of covalent cross-linkages, and the stabilization of collagen and elastin fibers. Essential for the elastic fiber homeostasis and for their maintenance at adult age. The chain is Lysyl oxidase homolog 1 (LOXL1) from Homo sapiens (Human).